Here is a 168-residue protein sequence, read N- to C-terminus: Lipoprotein signal peptidase (168 aa).

3 consecutive transmembrane segments (helical) span residues 12-32, 67-87, and 93-113; these read WYWVVVVVFLADQLSKQWVLA, WQRWLFTAVAVGFSVLLTIWL, and NMVRLNLAYTLVIGGALGNLI. Active-site residues include Asp-123 and Asp-141. Residues 136–156 form a helical membrane-spanning segment; that stretch reads AFNIADAAIFIGAVLIIIDSF.

This sequence belongs to the peptidase A8 family.

The protein resides in the cell inner membrane. It catalyses the reaction Release of signal peptides from bacterial membrane prolipoproteins. Hydrolyzes -Xaa-Yaa-Zaa-|-(S,diacylglyceryl)Cys-, in which Xaa is hydrophobic (preferably Leu), and Yaa (Ala or Ser) and Zaa (Gly or Ala) have small, neutral side chains.. The protein operates within protein modification; lipoprotein biosynthesis (signal peptide cleavage). Functionally, this protein specifically catalyzes the removal of signal peptides from prolipoproteins. The polypeptide is Lipoprotein signal peptidase (Shewanella amazonensis (strain ATCC BAA-1098 / SB2B)).